A 494-amino-acid chain; its full sequence is Cytochrome P450 2A8 (494 aa).

Cys439 serves as a coordination point for heme.

The protein belongs to the cytochrome P450 family. Heme serves as cofactor. As to expression, liver.

It localises to the endoplasmic reticulum membrane. Its subcellular location is the microsome membrane. It carries out the reaction an organic molecule + reduced [NADPH--hemoprotein reductase] + O2 = an alcohol + oxidized [NADPH--hemoprotein reductase] + H2O + H(+). Its function is as follows. Highly active in 7-ethoxycoumarin O-deethylation, and benzphetamine N-demethylation; moderately active in testosterone 7-alpha-hydroxylation, ethylmorphine N-demethylation, p-nitroanisole O-demethylation; and only slightly active in benzopyrene 3-hydroxylation, 7-ethoxyresorufin O-deethylation, testosterone 2-alpha-hydroxylation and testosterone 17-oxidation. Competent in the metabolic activation of aflatoxin B1. The protein is Cytochrome P450 2A8 (CYP2A8) of Mesocricetus auratus (Golden hamster).